The sequence spans 431 residues: Arginine biosynthesis bifunctional protein ArgJ, mitochondrial (431 aa).

Substrate is bound by residues Thr-174, Lys-200, Thr-211, Glu-297, Asn-426, and Thr-431. The active-site Nucleophile is the Thr-211.

Belongs to the ArgJ family. Heterodimer of an alpha and a beta chain. In terms of processing, the alpha and beta chains are autoproteolytically processed from a single precursor protein within the mitochondrion.

It is found in the mitochondrion matrix. The catalysed reaction is N(2)-acetyl-L-ornithine + L-glutamate = N-acetyl-L-glutamate + L-ornithine. It carries out the reaction L-glutamate + acetyl-CoA = N-acetyl-L-glutamate + CoA + H(+). The protein operates within amino-acid biosynthesis; L-arginine biosynthesis; L-ornithine and N-acetyl-L-glutamate from L-glutamate and N(2)-acetyl-L-ornithine (cyclic): step 1/1. Its pathway is amino-acid biosynthesis; L-arginine biosynthesis; N(2)-acetyl-L-ornithine from L-glutamate: step 1/4. Catalyzes two activities which are involved in the cyclic version of arginine biosynthesis: the synthesis of acetylglutamate from glutamate and acetyl-CoA, and of ornithine by transacetylation between acetylornithine and glutamate. The sequence is that of Arginine biosynthesis bifunctional protein ArgJ, mitochondrial from Yarrowia lipolytica (strain CLIB 122 / E 150) (Yeast).